The chain runs to 140 residues: MGTIFHLDIVSAEESIYSGPAEFIVAPAVMGEVGIYPQHTPMLTRIKSGVVRVKAPLQDDEEIYVSGGMLEVQPDVVTILADTAVRGQDLDEAKALEAKRKAEEIMKNKTSDIEYARAQAELIEATAQLAAIRKLRKRRH.

It belongs to the ATPase epsilon chain family. As to quaternary structure, F-type ATPases have 2 components, CF(1) - the catalytic core - and CF(0) - the membrane proton channel. CF(1) has five subunits: alpha(3), beta(3), gamma(1), delta(1), epsilon(1). CF(0) has three main subunits: a, b and c.

It localises to the cell inner membrane. Its function is as follows. Produces ATP from ADP in the presence of a proton gradient across the membrane. The protein is ATP synthase epsilon chain of Nitrosomonas eutropha (strain DSM 101675 / C91 / Nm57).